A 237-amino-acid polypeptide reads, in one-letter code: RING finger protein vilya (237 aa).

The RING-type zinc finger occupies 21–69 (CNSCCALFCDKKHTFFLLACHHVFCERCVKVSAGRTPSDAPIFECSTCR). Residues 172–237 (MHRMAQAYRS…IHPPNNSFDL (66 aa)) are disordered. The span at 180–195 (RSRSLTSQSSSSAQRS) shows a compositional bias: low complexity. Residues 221 to 237 (RQQITSFIHPPNNSFDL) are compositionally biased toward polar residues.

May interact with itself and with narya and nenya through their RING-type zinc fingers. In terms of tissue distribution, expressed in nurse cell and pro-oocytes (at protein level).

It localises to the chromosome. Functionally, required for the formation of DNA double-strand breaks during meiosis together with narya and nenya. This chain is RING finger protein vilya, found in Drosophila melanogaster (Fruit fly).